Reading from the N-terminus, the 452-residue chain is Lamina-associated polypeptide 2, isoform beta (452 aa).

Positions 1-409 (MPEFLEDPSV…KSEKTKKGRS (409 aa)) are nucleoplasmic. Residues 5–48 (LEDPSVLTKDKLKSELVANNVTLPAGEQRKDVYVQLYLQHLTAR) form the LEM-like domain. Disordered regions lie at residues 48–113 (RNRP…DVTE) and 149–264 (REQG…VEPS). Residues 49-107 (NRPPLAAGANSKGPPDFSSDEEREPTPVLGSGASVGRGRGAVGRKATKKTDKPRPEDKD) are linker. Residues Ser66 and Ser67 each carry the phosphoserine modification. Thr74 bears the Phosphothreonine mark. At Ser82 the chain carries Phosphoserine. An omega-N-methylarginine mark is found at Arg85 and Arg87. The segment covering 96–105 (KKTDKPRPED) has biased composition (basic and acidic residues). An LEM domain is found at 108–152 (DLDVTELSNEELLEQLVRYGVNPGPIVGTTRKLYEKKLLKLREQG). The tract at residues 137–242 (TRKLYEKKLL…TSGSSKGGPL (106 aa)) is NAKAP95-binding N. The span at 154-177 (ESRSSTPLPTVSSSAENTRQNGSN) shows a compositional bias: polar residues. 2 positions are modified to phosphoserine: Ser155 and Ser158. Thr159 bears the Phosphothreonine mark. Ser165, Ser167, Ser176, Ser179, and Ser183 each carry phosphoserine. The span at 178 to 202 (DSDRYSDNDEDSKIELKLEKREPLK) shows a compositional bias: basic and acidic residues. Lys206 carries the N6-acetyllysine modification. A binds lamins B region spans residues 298–370 (TGNFKHASSI…SCRRPIKGAA (73 aa)). An NAKAP95-binding C region spans residues 299–373 (GNFKHASSIL…RPIKGAAGRP (75 aa)). 3 positions are modified to phosphoserine: Ser305, Ser306, and Ser361. Lys388 bears the N6-acetyllysine mark. Residues 410-430 (VPMWIKMLLFALVAGFLFLVY) traverse the membrane as a helical; Signal-anchor for type II membrane protein segment. At 431 to 452 (QAMETNQGNPFTNFLQDTKISN) the chain is on the lumenal side.

Belongs to the LEM family. As to quaternary structure, interacts with LMNB1, LMNB2, BANF1, AKAP8L, GMCL and chromosomes. Post-translationally, mitosis-specific phosphorylation specifically abolishes its binding to lamin B and chromosomes.

It localises to the nucleus inner membrane. The protein localises to the chromosome. In terms of biological role, binds directly to lamin B1 and chromosomes in a mitotic phosphorylation-regulated manner. May play an important role in nuclear envelope reassembly at the end of mitosis and/or anchoring of the nuclear lamina and interphase chromosomes to the nuclear envelope. The sequence is that of Lamina-associated polypeptide 2, isoform beta (Tmpo) from Rattus norvegicus (Rat).